Reading from the N-terminus, the 307-residue chain is Myoblast determination protein 1 homolog (307 aa).

Residues D109–L160 form the bHLH domain. Positions T271 to L307 are disordered.

Efficient DNA binding requires dimerization with another bHLH protein. As to expression, expressed in fast and myotomal muscle. Very weak expression in brain, skin and gonads.

Its subcellular location is the nucleus. Functionally, may act as a transcriptional activator that promotes transcription of muscle-specific target genes and plays a role in muscle differentiation. This Takifugu rubripes (Japanese pufferfish) protein is Myoblast determination protein 1 homolog (myod).